The chain runs to 27 residues: Potassium channel toxin kappa-KTx 2.2 (27 aa).

2 disulfide bridges follow: cysteine 3/cysteine 21 and cysteine 7/cysteine 17.

Belongs to the short scorpion toxin superfamily. Potassium channel inhibitor kappa-KTx family. Kappa-KTx 2 subfamily. Expressed by the venom gland.

It localises to the secreted. OmTx1 decreases the amplitude of the potassium current of the rat channels Kv1.1/KCNA1 by 17% and Kv1.2/KCNA2 by 12% as well as human Kv1.3/KCNA3 by 24%. In terms of biological role, omTx2 decreases the amplitude of the potassium current of the rat channels Kv1.1/KCNA1 by 8% and Kv1.2/KCNA2 by 10% as well as human Kv1.3/KCNA3 by 36%. Also alters glucose-induced insulin release from pancreatic islets. The protein is Potassium channel toxin kappa-KTx 2.2 of Opisthacanthus madagascariensis (Scorpion).